The primary structure comprises 399 residues: Methylmalonic aciduria type A homolog, mitochondrial (399 aa).

Residues 1-15 (MVVRSLLRVSRLTSA) constitute a mitochondrion transit peptide. GTP-binding positions include 131–139 (GSPGVGKSS), D274, and 310–312 (SIM).

The protein belongs to the SIMIBI class G3E GTPase family. ArgK/MeaB subfamily.

It is found in the mitochondrion. In terms of biological role, may have GTPase activity. May also bind and hydrolyze ATP. May function as chaperone. Likely to have a role in propionyl-CoA and adenosylcobalamin metabolism. The polypeptide is Methylmalonic aciduria type A homolog, mitochondrial (mmaa-1) (Caenorhabditis elegans).